The chain runs to 802 residues: Lon protease (802 aa).

In terms of domain architecture, Lon N-terminal spans 21–215; the sequence is LPLLPVRDII…KIIQILNAEI (195 aa). Position 367 to 374 (367 to 374) interacts with ATP; that stretch reads GPPGVGKT. The region spanning 603-784 is the Lon proteolytic domain; the sequence is ENDVGVATGL…DEVISLTIER (182 aa). Residues Ser-690 and Lys-733 contribute to the active site.

The protein belongs to the peptidase S16 family. Homohexamer. Organized in a ring with a central cavity.

It is found in the cytoplasm. It carries out the reaction Hydrolysis of proteins in presence of ATP.. ATP-dependent serine protease that mediates the selective degradation of mutant and abnormal proteins as well as certain short-lived regulatory proteins. Required for cellular homeostasis and for survival from DNA damage and developmental changes induced by stress. Degrades polypeptides processively to yield small peptide fragments that are 5 to 10 amino acids long. Binds to DNA in a double-stranded, site-specific manner. In Endomicrobium trichonymphae, this protein is Lon protease.